The primary structure comprises 291 residues: Ribonuclease Z (291 aa).

Residues histidine 60, histidine 62, aspartate 64, histidine 65, histidine 132, aspartate 200, and histidine 256 each contribute to the Zn(2+) site. The active-site Proton acceptor is aspartate 64.

Belongs to the RNase Z family. In terms of assembly, homodimer. Zn(2+) is required as a cofactor.

It catalyses the reaction Endonucleolytic cleavage of RNA, removing extra 3' nucleotides from tRNA precursor, generating 3' termini of tRNAs. A 3'-hydroxy group is left at the tRNA terminus and a 5'-phosphoryl group is left at the trailer molecule.. Its function is as follows. Zinc phosphodiesterase, which displays some tRNA 3'-processing endonuclease activity. Probably involved in tRNA maturation, by removing a 3'-trailer from precursor tRNA. This chain is Ribonuclease Z, found in Metallosphaera sedula (strain ATCC 51363 / DSM 5348 / JCM 9185 / NBRC 15509 / TH2).